We begin with the raw amino-acid sequence, 293 residues long: 4-diphosphocytidyl-2-C-methyl-D-erythritol kinase (293 aa).

Residue lysine 23 is part of the active site. 109–119 (PVAAGIGGGSA) contacts ATP. Residue aspartate 151 is part of the active site.

It belongs to the GHMP kinase family. IspE subfamily.

The enzyme catalyses 4-CDP-2-C-methyl-D-erythritol + ATP = 4-CDP-2-C-methyl-D-erythritol 2-phosphate + ADP + H(+). Its pathway is isoprenoid biosynthesis; isopentenyl diphosphate biosynthesis via DXP pathway; isopentenyl diphosphate from 1-deoxy-D-xylulose 5-phosphate: step 3/6. Its function is as follows. Catalyzes the phosphorylation of the position 2 hydroxy group of 4-diphosphocytidyl-2C-methyl-D-erythritol. The protein is 4-diphosphocytidyl-2-C-methyl-D-erythritol kinase of Rhizorhabdus wittichii (strain DSM 6014 / CCUG 31198 / JCM 15750 / NBRC 105917 / EY 4224 / RW1) (Sphingomonas wittichii).